The sequence spans 223 residues: DNA mismatch repair protein MutH (223 aa).

It belongs to the MutH family.

The protein resides in the cytoplasm. Its function is as follows. Sequence-specific endonuclease that cleaves unmethylated GATC sequences. It is involved in DNA mismatch repair. In Haemophilus influenzae (strain PittGG), this protein is DNA mismatch repair protein MutH.